Reading from the N-terminus, the 160-residue chain is Phosphopantetheine adenylyltransferase (160 aa).

S9 provides a ligand contact to substrate. Residues 9–10 (SF) and H17 each bind ATP. Residues K41, V73, and K87 each contribute to the substrate site. ATP contacts are provided by residues 88-90 (GLR), E98, and 122-128 (YSFVSSS).

This sequence belongs to the bacterial CoaD family. In terms of assembly, homohexamer. Mg(2+) serves as cofactor.

It localises to the cytoplasm. It carries out the reaction (R)-4'-phosphopantetheine + ATP + H(+) = 3'-dephospho-CoA + diphosphate. Its pathway is cofactor biosynthesis; coenzyme A biosynthesis; CoA from (R)-pantothenate: step 4/5. In terms of biological role, reversibly transfers an adenylyl group from ATP to 4'-phosphopantetheine, yielding dephospho-CoA (dPCoA) and pyrophosphate. This chain is Phosphopantetheine adenylyltransferase, found in Mycobacterium avium (strain 104).